We begin with the raw amino-acid sequence, 303 residues long: MPVLEVKIGNLSFKNPVLTASGTFGYGLEYSQFVDLNILGGIVVKGLSLKPKQGNPPPRIYETPCGMINSIGLQNIGLEAFKKEKLPFLKKFNTNIIVNFFGENLDEYIEVAKLLDETEGVHALEMNVSCPNKTSEWRKMGLEPELLREAIKRVRLHIKKPLIVKLAPQVTEIALMARICEEEGADAVSLINTIPAMVIDIKTRKSMIGTLTGGLSGPAIRPVALRAVWEVAQAVKIPVIGVGGIVSAEDALQFLIAGAKAIQVGTANFINPIATVEIIEGIKQFLIEENIKDINEIIGSFKE.

Residues S21 and 45–46 (KG) contribute to the FMN site. Residues K45 and 69-73 (NSIGL) contribute to the substrate site. Residues N99 and N127 each contribute to the FMN site. N127 is a binding site for substrate. The active-site Nucleophile is the C130. Residues K165 and I191 each coordinate FMN. Residue 192–193 (NT) coordinates substrate. FMN contacts are provided by residues G217, 243-244 (GG), and 265-266 (GT).

The protein belongs to the dihydroorotate dehydrogenase family. Type 1 subfamily. As to quaternary structure, heterotetramer of 2 PyrK and 2 PyrD type B subunits. Requires FMN as cofactor.

The protein resides in the cytoplasm. It carries out the reaction (S)-dihydroorotate + NAD(+) = orotate + NADH + H(+). Its pathway is pyrimidine metabolism; UMP biosynthesis via de novo pathway; orotate from (S)-dihydroorotate (NAD(+) route): step 1/1. Functionally, catalyzes the conversion of dihydroorotate to orotate with NAD(+) as electron acceptor. The chain is Dihydroorotate dehydrogenase B (NAD(+)), catalytic subunit (pyrD) from Thermodesulfovibrio yellowstonii (strain ATCC 51303 / DSM 11347 / YP87).